The chain runs to 177 residues: UPF0114 protein HPP12_0190 (177 aa).

4 helical membrane passes run 15–35 (WLLA…GYAF), 54–74 (LVLS…VLMV), 102–122 (FNAL…IFLL), and 145–165 (PIFW…LAAV).

Belongs to the UPF0114 family.

Its subcellular location is the cell membrane. This Helicobacter pylori (strain P12) protein is UPF0114 protein HPP12_0190.